The primary structure comprises 303 residues: Ribonuclease HIII (303 aa).

The 215-residue stretch at 89–303 (WSVLGSDEVG…ANTKKAERLL (215 aa)) folds into the RNase H type-2 domain. A divalent metal cation-binding residues include aspartate 95, glutamate 96, and aspartate 199.

It belongs to the RNase HII family. RnhC subfamily. Mn(2+) serves as cofactor. Requires Mg(2+) as cofactor.

It localises to the cytoplasm. It carries out the reaction Endonucleolytic cleavage to 5'-phosphomonoester.. Endonuclease that specifically degrades the RNA of RNA-DNA hybrids. This chain is Ribonuclease HIII, found in Leuconostoc mesenteroides subsp. mesenteroides (strain ATCC 8293 / DSM 20343 / BCRC 11652 / CCM 1803 / JCM 6124 / NCDO 523 / NBRC 100496 / NCIMB 8023 / NCTC 12954 / NRRL B-1118 / 37Y).